The primary structure comprises 439 residues: MLSKLARLQTVAGLGLGVHSSVASATSVATKKTVQGPPSSDYIFERESKYGAHNYHPLPVALERGKGIYVWDVEGRKYFDFLSAYSAVNQGHCHPKIVDALKSQVDKLTLTSRAFYNNVLGEYEEYVTKLFNYHKVLPMNTGVEAGETACKLARKWGYTVKGIPKYKAKIVFAAGNFWGRTLSAISSSTDPTSYDGFGPFMPGFEIIPYNDLPALERALQDPNVAAFMVEPIQGEAGVVVPDPGYLVGVRELCTQHQVLFIADEIQTGLARTGRWLAIDHENVRPDIVLLGKALSGGLYPVSAVLCDDEIMLTIKPGEHGSTYGGNPLGCRVAIAALEVLEEENLAENAEKMGIILRNELMKLPSDVVTTVRGKGLLNAIVIRETKDCDAWKVCLRLRDNGLLAKPTHGDIIRFAPPLVIKEDEILEAVEIINKTILSF.

A mitochondrion-targeting transit peptide spans 1–25; it reads MLSKLARLQTVAGLGLGVHSSVASA. K49 and K66 each carry N6-acetyllysine. K102 carries the N6-succinyllysine modification. K107 is modified (N6-acetyllysine; alternate). The residue at position 107 (K107) is an N6-succinyllysine; alternate. K292 is modified (N6-(pyridoxal phosphate)lysine). K362 carries the N6-acetyllysine; alternate modification. K362 carries the post-translational modification N6-succinyllysine; alternate. Residues K386 and K392 each carry the N6-acetyllysine modification. K405 bears the N6-acetyllysine; alternate mark. The residue at position 405 (K405) is an N6-succinyllysine; alternate. An N6-acetyllysine modification is found at K421.

This sequence belongs to the class-III pyridoxal-phosphate-dependent aminotransferase family. Homohexamer. The cofactor is pyridoxal 5'-phosphate.

Its subcellular location is the mitochondrion matrix. The enzyme catalyses L-ornithine + 2-oxoglutarate = L-glutamate 5-semialdehyde + L-glutamate. It participates in amino-acid biosynthesis; L-proline biosynthesis; L-glutamate 5-semialdehyde from L-ornithine: step 1/1. Catalyzes the reversible interconversion of L-ornithine and 2-oxoglutarate to L-glutamate semialdehyde and L-glutamate. The chain is Ornithine aminotransferase, mitochondrial (OAT) from Bos taurus (Bovine).